A 186-amino-acid chain; its full sequence is Elongation factor P (186 aa).

This sequence belongs to the elongation factor P family.

It localises to the cytoplasm. Its pathway is protein biosynthesis; polypeptide chain elongation. Involved in peptide bond synthesis. Stimulates efficient translation and peptide-bond synthesis on native or reconstituted 70S ribosomes in vitro. Probably functions indirectly by altering the affinity of the ribosome for aminoacyl-tRNA, thus increasing their reactivity as acceptors for peptidyl transferase. This is Elongation factor P from Synechococcus sp. (strain CC9902).